A 487-amino-acid chain; its full sequence is DEAD-box ATP-dependent RNA helicase CshA (487 aa).

Positions 3–31 match the Q motif motif; the sequence is ITFQDFQLSSDLTKAIKRMGFEEATPIQA. The Helicase ATP-binding domain maps to 34–204; it reads IPLGLANKDV…ERFMTNPEHV (171 aa). Residue 47 to 54 participates in ATP binding; sequence AQTGTGKT. Positions 152–155 match the DEAD box motif; it reads DEAD. The region spanning 215 to 375 is the Helicase C-terminal domain; that stretch reads NIQQFYLEVH…RMKAPTLDEA (161 aa). Over residues 428 to 440 the composition is skewed to basic and acidic residues; the sequence is DNTPVRLTEEAPL. Positions 428–487 are disordered; it reads DNTPVRLTEEAPLRTKRNKNHHHRSSKRRDGGGYRGKNNRSSYDKKRSSNDRRQKKSYNS. Over residues 441–454 the composition is skewed to basic residues; it reads RTKRNKNHHHRSSK. The segment covering 469 to 479 has biased composition (basic and acidic residues); the sequence is SYDKKRSSNDR.

This sequence belongs to the DEAD box helicase family. CshA subfamily. Oligomerizes, may be a member of the RNA degradosome.

The protein localises to the cytoplasm. The catalysed reaction is ATP + H2O = ADP + phosphate + H(+). Functionally, DEAD-box RNA helicase possibly involved in RNA degradation. Unwinds dsRNA in both 5'- and 3'-directions, has RNA-dependent ATPase activity. The polypeptide is DEAD-box ATP-dependent RNA helicase CshA (Bacillus licheniformis (strain ATCC 14580 / DSM 13 / JCM 2505 / CCUG 7422 / NBRC 12200 / NCIMB 9375 / NCTC 10341 / NRRL NRS-1264 / Gibson 46)).